A 128-amino-acid polypeptide reads, in one-letter code: Large ribosomal subunit protein bL19 (128 aa).

Belongs to the bacterial ribosomal protein bL19 family.

In terms of biological role, this protein is located at the 30S-50S ribosomal subunit interface and may play a role in the structure and function of the aminoacyl-tRNA binding site. The sequence is that of Large ribosomal subunit protein bL19 from Paracidovorax citrulli (strain AAC00-1) (Acidovorax citrulli).